Consider the following 644-residue polypeptide: Chaperone protein DnaK (644 aa).

At T199 the chain carries Phosphothreonine; by autocatalysis. Residues 605–644 are disordered; that stretch reads KKSSEGQAAQGQTQSQESTKPVEEGVVDAEFEEVKEEDKK. A compositionally biased stretch (polar residues) spans 609 to 623; that stretch reads EGQAAQGQTQSQEST. Residues 629–644 are compositionally biased toward acidic residues; sequence GVVDAEFEEVKEEDKK.

The protein belongs to the heat shock protein 70 family.

Its function is as follows. Acts as a chaperone. This chain is Chaperone protein DnaK, found in Legionella pneumophila (strain Paris).